A 328-amino-acid chain; its full sequence is Glyoxylate reductase/hydroxypyruvate reductase (328 aa).

At serine 36 the chain carries Phosphoserine. Substrate is bound at residue 83–84; that stretch reads VG. NADP(+) contacts are provided by residues 162-164, 185-188, serine 217, and isoleucine 243; these read GRI and RQPR. Substrate-binding residues include arginine 245 and aspartate 269. Serine 272 bears the Phosphoserine mark. Histidine 293 (proton donor) is an active-site residue. 293–296 contributes to the substrate binding site; it reads HIGS. Glycine 295 serves as a coordination point for NADP(+). Threonine 298 carries the post-translational modification Phosphothreonine.

Belongs to the D-isomer specific 2-hydroxyacid dehydrogenase family. In terms of assembly, homodimer. Ubiquitous. Most abundantly expressed in the liver.

It carries out the reaction glycolate + NADP(+) = glyoxylate + NADPH + H(+). The catalysed reaction is (R)-glycerate + NAD(+) = 3-hydroxypyruvate + NADH + H(+). It catalyses the reaction (R)-glycerate + NADP(+) = 3-hydroxypyruvate + NADPH + H(+). In terms of biological role, enzyme with hydroxy-pyruvate reductase, glyoxylate reductase and D-glycerate dehydrogenase enzymatic activities. Reduces hydroxypyruvate to D-glycerate, glyoxylate to glycolate, oxidizes D-glycerate to hydroxypyruvate. The chain is Glyoxylate reductase/hydroxypyruvate reductase (GRHPR) from Homo sapiens (Human).